The sequence spans 145 residues: Ribonuclease VapC7 (145 aa).

Residues 2–129 (IVLDTTVLVY…PAFADLSDVV (128 aa)) enclose the PINc domain. Mg(2+)-binding residues include Asp5 and Asp100.

The protein belongs to the PINc/VapC protein family. Mg(2+) serves as cofactor.

In terms of biological role, toxic component of a type II toxin-antitoxin (TA) system. An RNase. The cognate antitoxin is VapB7. This is Ribonuclease VapC7 from Mycobacterium tuberculosis (strain ATCC 25618 / H37Rv).